We begin with the raw amino-acid sequence, 363 residues long: NAD(P)H-quinone oxidoreductase subunit 1, chloroplastic (363 aa).

The next 7 helical transmembrane spans lie at 30–50 (FIPIFTPVLGITIGVLVIVWL), 104–124 (IAVISILVSYSVVPFGSHLVL), 129–149 (IGVFLWIAISSIAPIGLLMSG), 248–268 (YSGIKFGLFYVASYLNLLVSS), 269–289 (LFVTILYLGGWNISIPYIFVF), 300–320 (VFEPTIGMFITLAKTYLFLFI), and 336–356 (LLNLGWKFLLPISLGNLLLTT).

The protein belongs to the complex I subunit 1 family. NDH is composed of at least 16 different subunits, 5 of which are encoded in the nucleus.

Its subcellular location is the plastid. It localises to the chloroplast thylakoid membrane. The enzyme catalyses a plastoquinone + NADH + (n+1) H(+)(in) = a plastoquinol + NAD(+) + n H(+)(out). It carries out the reaction a plastoquinone + NADPH + (n+1) H(+)(in) = a plastoquinol + NADP(+) + n H(+)(out). In terms of biological role, NDH shuttles electrons from NAD(P)H:plastoquinone, via FMN and iron-sulfur (Fe-S) centers, to quinones in the photosynthetic chain and possibly in a chloroplast respiratory chain. The immediate electron acceptor for the enzyme in this species is believed to be plastoquinone. Couples the redox reaction to proton translocation, and thus conserves the redox energy in a proton gradient. This chain is NAD(P)H-quinone oxidoreductase subunit 1, chloroplastic, found in Morus indica (Mulberry).